Consider the following 233-residue polypeptide: Small ribosomal subunit protein uS2 (233 aa).

This sequence belongs to the universal ribosomal protein uS2 family.

The sequence is that of Small ribosomal subunit protein uS2 from Bacillus anthracis.